Reading from the N-terminus, the 735-residue chain is Ion-translocating oxidoreductase complex subunit C (735 aa).

2 4Fe-4S ferredoxin-type domains span residues 368 to 397 and 407 to 436; these read MGAPQEEKSCIRCSACADACPADLLPQQLY and KATAHHIADCIECGACAWVCPSNIPLVQYF. Residues Cys-377, Cys-380, Cys-383, Cys-387, Cys-416, Cys-419, Cys-422, and Cys-426 each coordinate [4Fe-4S] cluster. The disordered stretch occupies residues 534–711; that stretch reads QARAKQAAHP…EPVEPADPRK (178 aa).

This sequence belongs to the 4Fe4S bacterial-type ferredoxin family. RnfC subfamily. In terms of assembly, the complex is composed of six subunits: RsxA, RsxB, RsxC, RsxD, RsxE and RsxG. Requires [4Fe-4S] cluster as cofactor.

The protein localises to the cell inner membrane. In terms of biological role, part of a membrane-bound complex that couples electron transfer with translocation of ions across the membrane. Required to maintain the reduced state of SoxR. The protein is Ion-translocating oxidoreductase complex subunit C of Salmonella paratyphi A (strain ATCC 9150 / SARB42).